The chain runs to 256 residues: Undecaprenyl-diphosphatase 2 (256 aa).

A run of 8 helical transmembrane segments spans residues 1–21 (MDIFNAIILGIIEGITEFLPI), 38–58 (ATATNQAFGVIIQLAAILAVL), 70–90 (LNLWIKVAIAFIPLGIIAFIF), 97–117 (LFNVPVVGVMFIVGGVIFLLL), 134–154 (VTYKQAIWIGIAQVFALIPGT), 175–195 (AEFSFLLGLPVLAAASGYDLL), 208–228 (ALAVGFVTSFIVAYFTIKLFI), and 236–256 (FVSFGIYRIVFGVILLTIAYV).

It belongs to the UppP family.

The protein localises to the cell inner membrane. It carries out the reaction di-trans,octa-cis-undecaprenyl diphosphate + H2O = di-trans,octa-cis-undecaprenyl phosphate + phosphate + H(+). In terms of biological role, catalyzes the dephosphorylation of undecaprenyl diphosphate (UPP). Confers resistance to bacitracin. The chain is Undecaprenyl-diphosphatase 2 from Pseudoalteromonas translucida (strain TAC 125).